A 209-amino-acid polypeptide reads, in one-letter code: Pyrrolidone-carboxylate peptidase (209 aa).

Residues glutamate 79, cysteine 142, and histidine 164 contribute to the active site.

It belongs to the peptidase C15 family. Homotetramer.

It localises to the cytoplasm. It catalyses the reaction Release of an N-terminal pyroglutamyl group from a polypeptide, the second amino acid generally not being Pro.. Its function is as follows. Removes 5-oxoproline from various penultimate amino acid residues except L-proline. The sequence is that of Pyrrolidone-carboxylate peptidase from Saccharolobus islandicus (strain L.S.2.15 / Lassen #1) (Sulfolobus islandicus).